The sequence spans 152 residues: Ribosome maturation factor RimP (152 aa).

Belongs to the RimP family.

It is found in the cytoplasm. Functionally, required for maturation of 30S ribosomal subunits. The protein is Ribosome maturation factor RimP of Stutzerimonas stutzeri (strain A1501) (Pseudomonas stutzeri).